Here is a 411-residue protein sequence, read N- to C-terminus: G1/S-specific cyclin pas1 (411 aa).

Disordered regions lie at residues 210–253 (LKNQ…PSVL) and 307–326 (SLSK…VGVY). Residues 218–252 (PSSSPQTTQDSSPILTMAPSTPVSVGSTPPSTPSV) show a composition bias toward low complexity.

It belongs to the cyclin family.

Essential for the control of the cell cycle at the G1/S (start) transition. Interacts with the pef1 protein kinase. The pef1/pas1 complex activates the res2/cdc10 complex. The polypeptide is G1/S-specific cyclin pas1 (pas1) (Schizosaccharomyces pombe (strain 972 / ATCC 24843) (Fission yeast)).